A 633-amino-acid polypeptide reads, in one-letter code: MHGLLLAAAGLLSLPLHVVAHPQPSTSLAGRGVDLDAYRMADRSSYMSSDDMKLKQPAIASLSGGNYVDTATEVVKRMMPGMTFRMADDHYVGESGISHLYFRQTMHGMDIDNADFNVNIGKDGKVLSFGHSFYTGPAPDRAPVEKRDFSGPMRAFHGACKALNLPINADKATIQTMNEHEVMFVGTSGAMSDPQGKLCYMAKEDGTLALTWRVETDMGDNWLLSYVDAKETDKVHNVVDYVSHATYQVYRWPIPDPTEGKREIVENPWNLKTSPFTWISDGKTNYTTTRGNNAIAQANFDGGEDYLNNYRPNSKNLKFEYPYAPNMSPPKSYIDASVTQLFYSANIVHDLYYMLGFTEKAGNFQVNNHGQGGKGNDFVILNAQDGSGTNNANFATPPDGKPGRMRVYIWTKAKPARDSSFEAGTVIHEYTHGLSNRLCGGPANSGCLNGMESGGMGEGWGDFFATAIRLKPNDNRNANYVHGEWVNNSPKGNRLYPYSTNLQTNPLVYTSCNKYNEVHAIGTVWCSILYEVLWNLIDKHGKNDGPTPVFENGVPNDGKYLAMKLVLDGMAIQPCKPTFVQARDAIIDADMNLTKGSNKCELWKAFAKRGLGVGAKYDPKNRTGSKAVPKECQ.

Residues 1–21 (MHGLLLAAAGLLSLPLHVVAH) form the signal peptide. Residues 22–245 (PQPSTSLAGR…HNVVDYVSHA (224 aa)) constitute a propeptide that is removed on maturation. N-linked (GlcNAc...) asparagine glycosylation is present at asparagine 285. Histidine 428 contacts Zn(2+). Glutamate 429 is a catalytic residue. Histidine 432 contacts Zn(2+). Asparagine 592 and asparagine 621 each carry an N-linked (GlcNAc...) asparagine glycan.

Belongs to the peptidase M36 family. Zn(2+) is required as a cofactor.

Its subcellular location is the secreted. Functionally, secreted metalloproteinase probably acting as a virulence factor. The polypeptide is Extracellular metalloproteinase 5 (MEP5) (Trichophyton rubrum (Athlete's foot fungus)).